The primary structure comprises 210 residues: Large ribosomal subunit protein uL4 (210 aa).

Residues 41-51 (QNNARQGNASA) show a composition bias toward polar residues. A disordered region spans residues 41–77 (QNNARQGNASAKTRAEVRGGGRKPWKQKGTGRARAGS). Residues 60 to 71 (GGRKPWKQKGTG) show a composition bias toward basic residues.

Belongs to the universal ribosomal protein uL4 family. Part of the 50S ribosomal subunit.

One of the primary rRNA binding proteins, this protein initially binds near the 5'-end of the 23S rRNA. It is important during the early stages of 50S assembly. It makes multiple contacts with different domains of the 23S rRNA in the assembled 50S subunit and ribosome. In terms of biological role, forms part of the polypeptide exit tunnel. The chain is Large ribosomal subunit protein uL4 from Synechocystis sp. (strain ATCC 27184 / PCC 6803 / Kazusa).